We begin with the raw amino-acid sequence, 652 residues long: uncharacterized protein (652 aa).

Composition is skewed to basic and acidic residues over residues 1 to 13 and 641 to 652; these read MSVTESKAKTERK and ATERTDNLADAA. Disordered stretches follow at residues 1–21 and 628–652; these read MSVTESKAKTERKSSRKPAKT and VPGWMCAPRPQTDATERTDNLADAA.

This sequence belongs to the ParB family.

This is an uncharacterized protein from Escherichia coli O157:H7.